A 490-amino-acid polypeptide reads, in one-letter code: Protein nucleotidyltransferase YdiU (490 aa).

Residues Gly89, Gly91, Arg92, Lys112, Asp124, Gly125, Arg175, and Arg182 each coordinate ATP. The active-site Proton acceptor is Asp251. The Mg(2+) site is built by Asn252 and Asp261. Residue Asp261 coordinates ATP.

This sequence belongs to the SELO family. It depends on Mg(2+) as a cofactor. Mn(2+) serves as cofactor.

The enzyme catalyses L-seryl-[protein] + ATP = 3-O-(5'-adenylyl)-L-seryl-[protein] + diphosphate. It carries out the reaction L-threonyl-[protein] + ATP = 3-O-(5'-adenylyl)-L-threonyl-[protein] + diphosphate. It catalyses the reaction L-tyrosyl-[protein] + ATP = O-(5'-adenylyl)-L-tyrosyl-[protein] + diphosphate. The catalysed reaction is L-histidyl-[protein] + UTP = N(tele)-(5'-uridylyl)-L-histidyl-[protein] + diphosphate. The enzyme catalyses L-seryl-[protein] + UTP = O-(5'-uridylyl)-L-seryl-[protein] + diphosphate. It carries out the reaction L-tyrosyl-[protein] + UTP = O-(5'-uridylyl)-L-tyrosyl-[protein] + diphosphate. In terms of biological role, nucleotidyltransferase involved in the post-translational modification of proteins. It can catalyze the addition of adenosine monophosphate (AMP) or uridine monophosphate (UMP) to a protein, resulting in modifications known as AMPylation and UMPylation. The sequence is that of Protein nucleotidyltransferase YdiU from Vibrio vulnificus (strain CMCP6).